The primary structure comprises 202 residues: Small ribosomal subunit protein uS5 (202 aa).

The S5 DRBM domain maps to 50–113 (LKQEILNINV…REAKLNLTPV (64 aa)).

This sequence belongs to the universal ribosomal protein uS5 family. Part of the 30S ribosomal subunit. Contacts protein S4.

Functionally, with S4 and S12 plays an important role in translational accuracy. The sequence is that of Small ribosomal subunit protein uS5 from Pyrobaculum islandicum (strain DSM 4184 / JCM 9189 / GEO3).